Reading from the N-terminus, the 88-residue chain is Small ribosomal subunit protein uS15 (88 aa).

Belongs to the universal ribosomal protein uS15 family. In terms of assembly, part of the 30S ribosomal subunit. Forms a bridge to the 50S subunit in the 70S ribosome, contacting the 23S rRNA.

One of the primary rRNA binding proteins, it binds directly to 16S rRNA where it helps nucleate assembly of the platform of the 30S subunit by binding and bridging several RNA helices of the 16S rRNA. Its function is as follows. Forms an intersubunit bridge (bridge B4) with the 23S rRNA of the 50S subunit in the ribosome. This is Small ribosomal subunit protein uS15 from Francisella tularensis subsp. tularensis (strain FSC 198).